The following is a 309-amino-acid chain: Porphobilinogen deaminase (309 aa).

Cysteine 241 bears the S-(dipyrrolylmethanemethyl)cysteine mark.

The protein belongs to the HMBS family. In terms of assembly, monomer. It depends on dipyrromethane as a cofactor.

The enzyme catalyses 4 porphobilinogen + H2O = hydroxymethylbilane + 4 NH4(+). Its pathway is porphyrin-containing compound metabolism; protoporphyrin-IX biosynthesis; coproporphyrinogen-III from 5-aminolevulinate: step 2/4. Functionally, tetrapolymerization of the monopyrrole PBG into the hydroxymethylbilane pre-uroporphyrinogen in several discrete steps. The polypeptide is Porphobilinogen deaminase (Bacillus cereus (strain B4264)).